Here is a 630-residue protein sequence, read N- to C-terminus: Probable potassium transport system protein Kup 1 (630 aa).

Helical transmembrane passes span 15–35, 58–78, 104–124, 142–162, 173–193, 208–228, 252–272, 290–310, 342–362, 368–388, 399–419, and 424–444; these read LLAMALGSVGVVYGDIGTSPL, LISLMIWALTIIVTIKYVLFL, TAILFFMGIAGAALFIGDAMI, PALSDYVVPIAVVILLFLFAV, FFGPITLVWFLVMGAVGFMHI, AVAFLFNEGYVGIVVLGAVFL, WFTVVFPALTLNYLGQGAFVL, ALLPAVILATAATIIASQAVI, IYLPNVNTLLMFGVMALVFIF, LATAYGISVTGAMVVTTVLAF, AWWAAGVLLPLFALELVFLGA, and IHDGGYVPILIAATFIVIMWT.

This sequence belongs to the HAK/KUP transporter (TC 2.A.72) family.

It is found in the cell inner membrane. It carries out the reaction K(+)(in) + H(+)(in) = K(+)(out) + H(+)(out). Transport of potassium into the cell. Likely operates as a K(+):H(+) symporter. The protein is Probable potassium transport system protein Kup 1 of Sinorhizobium medicae (strain WSM419) (Ensifer medicae).